Consider the following 1268-residue polypeptide: Vigilin (1268 aa).

N-acetylserine is present on S2. T8 carries the post-translational modification Phosphothreonine. S11, S31, and S35 each carry phosphoserine. KH domains follow at residues 150–212, 222–284, 295–357, 364–424, 435–497, 507–570, and 581–643; these read QASA…RHEV, RAVK…VARI, TTTI…LTEV, FTVS…QEQI, MDYV…KREL, ERTK…TKYM, and SYSI…RSRI. Phosphothreonine occurs at positions 295 and 296. Residue S317 is modified to Phosphoserine. Y437 is modified (phosphotyrosine). At S645 the chain carries Phosphoserine. KH domains follow at residues 653–716, 727–790, 800–863, 873–967, 972–1034, 1052–1117, and 1127–1190; these read IAEV…KKQL, SFTV…QKEL, VVED…KKRI, QVTL…KEAL, PVTI…KAGL, SFKL…RDAI, and MVSE…IDHI. Residues 910–946 form a disordered region; the sequence is PDREENPVHSVEPSIQENGDEAGEGREAKETDPGSPR. Positions 932–946 are enriched in basic and acidic residues; it reads GEGREAKETDPGSPR. K991 is modified (N6-acetyllysine). Positions 1214-1268 are disordered; the sequence is PAHEESKAPSKGFVVRDAPWTSNSSEKAPDMSSSEEIPTFGAQVAPKTLPWGPKR. Positions 1233–1249 are enriched in polar residues; the sequence is WTSNSSEKAPDMSSSEE. A Phosphoserine modification is found at S1247.

The protein localises to the cytoplasm. Its subcellular location is the nucleus. Appears to play a role in cell sterol metabolism. It may function to protect cells from over-accumulation of cholesterol. The polypeptide is Vigilin (Hdlbp) (Rattus norvegicus (Rat)).